We begin with the raw amino-acid sequence, 532 residues long: Small ribosomal subunit protein uS2cz (532 aa).

Positions 1–271 (METLEKNFKK…SPISSKEKKA (271 aa)) are N-terminal extension. 3 TRAM domains span residues 38 to 97 (ALQA…SILN), 127 to 186 (DFKV…KPIL), and 197 to 260 (NQMI…KILK).

This sequence belongs to the universal ribosomal protein uS2 family.

It is found in the plastid. Its subcellular location is the chloroplast. This chain is Small ribosomal subunit protein uS2cz (rps2-1), found in Tetradesmus obliquus (Green alga).